Consider the following 244-residue polypeptide: Tubulin-folding cofactor B (244 aa).

N-acetylmethionine is present on M1. At S65 the chain carries Phosphoserine; by PAK1. Y98 is modified (phosphotyrosine). S110 bears the Phosphoserine mark. Residue S128 is modified to Phosphoserine; by PAK1. Residues 183-225 enclose the CAP-Gly domain; that stretch reads GLTDFKPGYWVGVRYDEPLGKNDGSVNGKRYFECQAKYGAFVK. K219 carries the post-translational modification N6-acetyllysine.

It belongs to the TBCB family. Supercomplex made of cofactors A to E. Cofactors A and D function by capturing and stabilizing tubulin in a quasi-native conformation. Cofactor E binds to the cofactor D-tubulin complex; interaction with cofactor C then causes the release of tubulin polypeptides that are committed to the native state. Cofactors B and E can form a heterodimer which binds to alpha-tubulin and enhances their ability to dissociate tubulin heterodimers. Interacts with GAN. Interacts with DCTN1. In terms of processing, phosphorylation by PAK1 is required for normal function. Ubiquitinated in the presence of GAN which targets it for degradation by the proteasome. Widely expressed with highest levels in brain. Broadly distributed throughout the neonate brain but restricted mainly to ependymary cells in the adult brain where it is concentrated in the cilia.

The protein resides in the cytoplasm. Its subcellular location is the cytoskeleton. Functionally, binds to alpha-tubulin folding intermediates after their interaction with cytosolic chaperonin in the pathway leading from newly synthesized tubulin to properly folded heterodimer. Involved in regulation of tubulin heterodimer dissociation. May function as a negative regulator of axonal growth. The polypeptide is Tubulin-folding cofactor B (Tbcb) (Mus musculus (Mouse)).